The following is a 96-amino-acid chain: Conotoxin Mr15.1 (96 aa).

The N-terminal stretch at 1 to 20 (MSTLKMMLLILLLLLPLATF) is a signal peptide. A propeptide spanning residues 21–57 (DSDGQAIPGGGIPSAVNSRVGRLLGGDEKSGRSLEKR) is cleaved from the precursor.

The protein belongs to the conotoxin N superfamily. In terms of processing, contains 4 disulfide bonds. In terms of tissue distribution, expressed by the venom duct.

The protein localises to the secreted. The chain is Conotoxin Mr15.1 from Conus marmoreus (Marble cone).